Consider the following 1166-residue polypeptide: DEAD-box ATP-dependent RNA helicase 42 (1166 aa).

Composition is skewed to basic and acidic residues over residues 1–12 and 21–45; these read MEVEKSKYRSED and DLKK…EKRR. The interval 1 to 460 is disordered; sequence MEVEKSKYRS…NDDDPSLDED (460 aa). A coiled-coil region spans residues 14 to 95; that stretch reads DVVEEEADLK…KDRVKRRSER (82 aa). The span at 59–70 shows a compositional bias: acidic residues; that stretch reads SEDDYDRDDDEE. The span at 80–95 shows a compositional bias: basic residues; the sequence is ERRRRDKDRVKRRSER. Over residues 101 to 110 the composition is skewed to acidic residues; the sequence is SEDDVEEEDE. Basic and acidic residues predominate over residues 111 to 206; sequence RDKRRVNEKE…RERERSREVG (96 aa). The stretch at 130–302 forms a coiled coil; the sequence is RGKDRKRDRE…KRKKEEAESE (173 aa). The residue at position 210 (Ser210) is a Phosphoserine. The segment covering 224–314 has biased composition (basic and acidic residues); sequence EGGERKEKER…GDADGNEPKA (91 aa). Residue Ser324 is modified to Phosphoserine. Composition is skewed to basic and acidic residues over residues 344 to 357 and 416 to 426; these read ETKP…KMVD and MNGKESGDRPK. Positions 529–557 match the Q motif motif; the sequence is KFWHQTGLTSKILDTMKKLNYEKPMPIQT. Residues 560-738 form the Helicase ATP-binding domain; the sequence is LPIIMSGRDC…RKVLNKPVEI (179 aa). 573–580 contributes to the ATP binding site; that stretch reads AKTGSGKT. The short motif at 686–689 is the DEAD box element; sequence DEAD. A Helicase C-terminal domain is found at 749–910; that stretch reads DITQLVEVRP…PVPDDLKALA (162 aa).

The protein belongs to the DEAD box helicase family. DDX46/PRP5 subfamily.

The protein resides in the nucleus. It catalyses the reaction ATP + H2O = ADP + phosphate + H(+). Helicase required for pre-mRNA splicing, cold-responsive gene regulation and cold tolerance. The polypeptide is DEAD-box ATP-dependent RNA helicase 42 (RH42) (Arabidopsis thaliana (Mouse-ear cress)).